The primary structure comprises 255 residues: Fe(3+) dicitrate transport ATP-binding protein FecE (255 aa).

The 236-residue stretch at 3–238 (LRTENLTVSY…GLLRTVFSVE (236 aa)) folds into the ABC transporter domain. An ATP-binding site is contributed by 35 to 42 (GPNGCGKS).

This sequence belongs to the ABC transporter superfamily. In terms of assembly, the complex is composed of two ATP-binding proteins (FecE), two transmembrane proteins (FecC and FecD) and a solute-binding protein (FecB).

The protein resides in the cell inner membrane. The catalysed reaction is iron(III) dicitrate(out) + ATP + H2O = iron(III) dicitrate(in) + ADP + phosphate + H(+). Functionally, part of the ABC transporter complex FecBCDE involved in citrate-dependent Fe(3+) uptake. Binds ATP. Probably responsible for energy coupling to the transport system. The chain is Fe(3+) dicitrate transport ATP-binding protein FecE from Escherichia coli (strain K12).